Here is a 563-residue protein sequence, read N- to C-terminus: MNNKEIVAKALHDVLNEELTMDQIEQLLENPKSVDHGDVAFPAFSLAKIYRKAPQQIAAELAEKIDGTNFEKIEVVGPYLNFFMNKEAVSQAVIGEVVKEKNNYGNSTFGNNGNVPIDMSSPNIAKPISMGHLRSTVIGNSIAFILEKIGYQPIRINHLGDWGTQFGKLIVAYKKWGSEEAVRQQPINELLRLYVQFHEEAEEKPELEDEARAWFKKLEEGDQEANELWKWFRSESLKEFDKIYSMLEVEFDSYNGEAFYNDKMDEIVTLLEEKHLLTENQGAEIVDLTEYNLNPALIRKSDGATLYITRDLAAALYRKRTYDFAKSLYVVGNEQSNHFKQLKAVLKELGFDWSDDMEHIPFGLITQGGKKLSTRKGKIVLLEEVLNEAVTLAGNQINEKNPDLANREEVAKQVGVGAVIFHDLKNDRLNNFDFVLDEVVRFEGETGPYVQYTHARAMSILRKANFTPDATQRYALNDKDSWEVVKLLQKFPETVMQAAEKYEPSVIAKHSIHLAQAFNKYYAHVRILDEDAQKEARLALVYAVATVLKEDLRLLGLHAPEEM.

The short motif at 122–132 (PNIAKPISMGH) is the 'HIGH' region element.

The protein belongs to the class-I aminoacyl-tRNA synthetase family. In terms of assembly, monomer.

It localises to the cytoplasm. It catalyses the reaction tRNA(Arg) + L-arginine + ATP = L-arginyl-tRNA(Arg) + AMP + diphosphate. This Enterococcus faecalis (strain ATCC 700802 / V583) protein is Arginine--tRNA ligase.